The following is a 367-amino-acid chain: Cell division protein FtsZ (367 aa).

GTP is bound by residues 17–21, 104–106, Glu135, Lys139, and Asp183; these read GGGSN and GTG.

It belongs to the FtsZ family. As to quaternary structure, homodimer. Polymerizes to form a dynamic ring structure in a strictly GTP-dependent manner. Interacts directly with several other division proteins.

Its subcellular location is the cytoplasm. Essential cell division protein that forms a contractile ring structure (Z ring) at the future cell division site. The regulation of the ring assembly controls the timing and the location of cell division. One of the functions of the FtsZ ring is to recruit other cell division proteins to the septum to produce a new cell wall between the dividing cells. Binds GTP and shows GTPase activity. This is Cell division protein FtsZ from Aquifex aeolicus (strain VF5).